The primary structure comprises 301 residues: Chitin deacetylase 1 (301 aa).

The N-terminal stretch at 1 to 24 is a signal peptide; sequence MKIFNTIQSVLFAAFFLKQGNCLA. N-linked (GlcNAc...) asparagine glycans are attached at residues N26, N50, and N68. Residues C107 and C290 are joined by a disulfide bond. The NodB homology domain occupies 108–288; sequence FKLSQTFDDG…LIGSDQLTIA (181 aa). Catalysis depends on D115, which acts as the Proton acceptor. D115 is an acetate binding site. Co(2+) is bound by residues D116, H162, and H166. N-linked (GlcNAc...) asparagine glycosylation occurs at N189. Y203 is an acetate binding site. H263 functions as the Proton donor in the catalytic mechanism.

It belongs to the polysaccharide deacetylase family. Co(2+) serves as cofactor.

The protein localises to the prospore. It catalyses the reaction [(1-&gt;4)-N-acetyl-beta-D-glucosaminyl](n) + n H2O = chitosan + n acetate. Functionally, hydrolyzes the N-acetamido groups of N-acetyl-D-glucosamine residues in chitin to form chitosan and acetate. Chitosan is a component of the spore wall. This chain is Chitin deacetylase 1, found in Saccharomyces cerevisiae (strain ATCC 204508 / S288c) (Baker's yeast).